Consider the following 558-residue polypeptide: Glucose-6-phosphate isomerase (558 aa).

Catalysis depends on E362, which acts as the Proton donor. Catalysis depends on residues H393 and K523.

It belongs to the GPI family.

The protein localises to the cytoplasm. It catalyses the reaction alpha-D-glucose 6-phosphate = beta-D-fructose 6-phosphate. Its pathway is carbohydrate degradation; glycolysis; D-glyceraldehyde 3-phosphate and glycerone phosphate from D-glucose: step 2/4. The protein is Glucose-6-phosphate isomerase (Pgi) of Drosophila melanogaster (Fruit fly).